The chain runs to 454 residues: Aspartate aminotransferase P2, mitochondrial (454 aa).

Residues 1–49 constitute a mitochondrion transit peptide; the sequence is SSLLSIPSLSLQYNDKLKVGGNSLRFSKEQSNTFSNAKSSCRISMVAAV. 3 residues coordinate L-aspartate: Gly-86, Trp-182, and Asn-235. The residue at position 299 (Lys-299) is an N6-(pyridoxal phosphate)lysine. Position 428 (Arg-428) interacts with L-aspartate.

The protein belongs to the class-I pyridoxal-phosphate-dependent aminotransferase family. Homodimer. It depends on pyridoxal 5'-phosphate as a cofactor.

It is found in the mitochondrion matrix. The catalysed reaction is L-aspartate + 2-oxoglutarate = oxaloacetate + L-glutamate. Its function is as follows. Important for the metabolism of amino acids and Krebs-cycle related organic acids. In plants, it is involved in nitrogen metabolism and in aspects of carbon and energy metabolism. This chain is Aspartate aminotransferase P2, mitochondrial, found in Lupinus angustifolius (Narrow-leaved blue lupine).